The sequence spans 328 residues: Transcription factor bHLH84 (328 aa).

The tract at residues 145–248 (QCESSKKRTR…ASRGAATDPQ (104 aa)) is disordered. Over residues 220–229 (LSKEDGEDSK) the composition is skewed to basic and acidic residues. The bHLH domain maps to 243-292 (AATDPQSLYARKRRERINERLRILQHLVPNGTKVDISTMLEEAVQYVKFL).

It belongs to the bHLH protein family. As to quaternary structure, homodimer.

The protein resides in the nucleus. In Arabidopsis thaliana (Mouse-ear cress), this protein is Transcription factor bHLH84 (BHLH84).